A 319-amino-acid polypeptide reads, in one-letter code: Ribonuclease Z (319 aa).

H62, H64, D66, H67, H145, D215, and H273 together coordinate Zn(2+). Catalysis depends on D66, which acts as the Proton acceptor.

The protein belongs to the RNase Z family. Homodimer. Zn(2+) is required as a cofactor.

It catalyses the reaction Endonucleolytic cleavage of RNA, removing extra 3' nucleotides from tRNA precursor, generating 3' termini of tRNAs. A 3'-hydroxy group is left at the tRNA terminus and a 5'-phosphoryl group is left at the trailer molecule.. Zinc phosphodiesterase, which displays some tRNA 3'-processing endonuclease activity. Probably involved in tRNA maturation, by removing a 3'-trailer from precursor tRNA. This chain is Ribonuclease Z, found in Borrelia garinii subsp. bavariensis (strain ATCC BAA-2496 / DSM 23469 / PBi) (Borreliella bavariensis).